A 510-amino-acid polypeptide reads, in one-letter code: F-box only protein 15 (510 aa).

The 41-residue stretch at 77–117 folds into the F-box domain; the sequence is MPSEILLKIFSYLDAVSLLCTGCVSRRFYHLANDNFIWIGI.

As to quaternary structure, directly interacts with SKP1 and CUL1.

Substrate-recognition component of the SCF (SKP1-CUL1-F-box protein)-type E3 ubiquitin ligase complex. This chain is F-box only protein 15 (FBXO15), found in Homo sapiens (Human).